We begin with the raw amino-acid sequence, 142 residues long: Large ribosomal subunit protein uL13 (142 aa).

Belongs to the universal ribosomal protein uL13 family. In terms of assembly, part of the 50S ribosomal subunit.

This protein is one of the early assembly proteins of the 50S ribosomal subunit, although it is not seen to bind rRNA by itself. It is important during the early stages of 50S assembly. The chain is Large ribosomal subunit protein uL13 from Baumannia cicadellinicola subsp. Homalodisca coagulata.